Reading from the N-terminus, the 1404-residue chain is DNA-directed RNA polymerase subunit beta' (1404 aa).

Positions 60, 62, 75, and 78 each coordinate Zn(2+). Mg(2+) is bound by residues aspartate 449, aspartate 451, and aspartate 453. Cysteine 778, cysteine 852, cysteine 859, and cysteine 862 together coordinate Zn(2+). Positions 1380-1404 (LDRPLEEEEEEEIPQAIAEESDAEE) are disordered. Over residues 1384 to 1404 (LEEEEEEEIPQAIAEESDAEE) the composition is skewed to acidic residues.

This sequence belongs to the RNA polymerase beta' chain family. The RNAP catalytic core consists of 2 alpha, 1 beta, 1 beta' and 1 omega subunit. When a sigma factor is associated with the core the holoenzyme is formed, which can initiate transcription. Mg(2+) serves as cofactor. Requires Zn(2+) as cofactor.

The enzyme catalyses RNA(n) + a ribonucleoside 5'-triphosphate = RNA(n+1) + diphosphate. Functionally, DNA-dependent RNA polymerase catalyzes the transcription of DNA into RNA using the four ribonucleoside triphosphates as substrates. In Leptospira interrogans serogroup Icterohaemorrhagiae serovar Lai (strain 56601), this protein is DNA-directed RNA polymerase subunit beta'.